A 395-amino-acid chain; its full sequence is Multidrug resistance protein MdtL (395 aa).

12 helical membrane passes run 4–24 (FLLC…MYLV), 42–62 (IAFS…GKIA), 69–89 (PVAI…SRAS), 93–113 (LFLS…VVAF), 131–151 (LLNG…HLIM), 158–178 (SLFY…LFIL), 217–237 (VSVI…VMGF), 247–267 (ALTA…LGLF), 271–291 (TLML…SLAH), 295–315 (VTLF…GVAM), 328–350 (VASS…LAAI), and 355–377 (AMNM…IFSV).

The protein belongs to the major facilitator superfamily. DHA1 family. MdtL (TC 2.A.1.2.22) subfamily.

The protein localises to the cell inner membrane. This chain is Multidrug resistance protein MdtL, found in Salmonella dublin (strain CT_02021853).